The primary structure comprises 279 residues: Elongation factor Ts (279 aa).

The segment at 80-83 (TDFV) is involved in Mg(2+) ion dislocation from EF-Tu.

Belongs to the EF-Ts family.

The protein resides in the cytoplasm. In terms of biological role, associates with the EF-Tu.GDP complex and induces the exchange of GDP to GTP. It remains bound to the aminoacyl-tRNA.EF-Tu.GTP complex up to the GTP hydrolysis stage on the ribosome. The chain is Elongation factor Ts from Borreliella afzelii (strain PKo) (Borrelia afzelii).